Here is a 77-residue protein sequence, read N- to C-terminus: uncharacterized protein (77 aa).

Composition is skewed to basic and acidic residues over residues 1–24 and 37–58; these read CPVA…EDQR and EGPK…ERGP. The disordered stretch occupies residues 1–77; it reads CPVAEEHFLV…RHGPKRKPAK (77 aa). Basic residues predominate over residues 66–77; that stretch reads RPRHGPKRKPAK.

This is an uncharacterized protein from Macaca fascicularis (Crab-eating macaque).